The following is a 622-amino-acid chain: 1,4-alpha-glucan branching enzyme GlgB (622 aa).

The Nucleophile role is filled by Asp-300. Glu-351 (proton donor) is an active-site residue.

It belongs to the glycosyl hydrolase 13 family. GlgB subfamily. Monomer.

It catalyses the reaction Transfers a segment of a (1-&gt;4)-alpha-D-glucan chain to a primary hydroxy group in a similar glucan chain.. It participates in glycan biosynthesis; glycogen biosynthesis. Its function is as follows. Catalyzes the formation of the alpha-1,6-glucosidic linkages in glycogen by scission of a 1,4-alpha-linked oligosaccharide from growing alpha-1,4-glucan chains and the subsequent attachment of the oligosaccharide to the alpha-1,6 position. This chain is 1,4-alpha-glucan branching enzyme GlgB, found in Streptococcus agalactiae serotype III (strain NEM316).